Reading from the N-terminus, the 163-residue chain is Putative pre-16S rRNA nuclease (163 aa).

The protein belongs to the YqgF nuclease family.

It is found in the cytoplasm. Its function is as follows. Could be a nuclease involved in processing of the 5'-end of pre-16S rRNA. This is Putative pre-16S rRNA nuclease from Zymomonas mobilis subsp. mobilis (strain ATCC 31821 / ZM4 / CP4).